Reading from the N-terminus, the 1483-residue chain is Protein ORF C (1483 aa).

Disordered regions lie at residues 135–268 (LNDR…GRPP), 306–334 (VPYQ…LRPV), 383–506 (RRRA…FKRH), 518–653 (SIDD…DRNR), 680–911 (RQRR…TSVS), 949–976 (SSDD…RGGS), 1013–1061 (ALQQ…TDLI), and 1089–1299 (FSVA…QPSD). Residues 141 to 153 (AAGSAQRGSAGSR) are compositionally biased toward low complexity. Residues 157–170 (DNLTPTAADTTGAQ) show a composition bias toward polar residues. Composition is skewed to low complexity over residues 190–206 (ASNV…RRQQ) and 220–251 (ARQQ…TTAT). Over residues 252 to 264 (RQVFEQQGPSTIQ) the composition is skewed to polar residues. Composition is skewed to low complexity over residues 424–449 (SGQS…TTGT), 474–483 (SNEPSRQSQS), and 529–541 (TMTQ…STTR). The segment covering 596-607 (GSVTTTQPSGQL) has biased composition (polar residues). Over residues 609 to 621 (SDDRGRPAPERRQ) the composition is skewed to basic and acidic residues. Residues 622–640 (QPTSRQTVAQTNIIPNTSG) show a composition bias toward polar residues. Over residues 680–689 (RQRRETEAEH) the composition is skewed to basic and acidic residues. Residues 699–710 (TGVTPQRSNNPF) show a composition bias toward polar residues. Basic and acidic residues predominate over residues 740–749 (SLREYRRRDP). The span at 754 to 774 (GRSYTDGSTTSDGDSSDNSWS) shows a compositional bias: low complexity. A compositionally biased stretch (polar residues) spans 841 to 876 (NLKSPSPRTKLTRSSSLKSPGTTTRDTQQTSHPLTR). Over residues 894 to 909 (DSGGSSDGNTGSSQTS) the composition is skewed to low complexity. Polar residues-rich tracts occupy residues 1096 to 1109 (GSTS…SSIP) and 1116 to 1125 (GPSTMTSQSV). The segment covering 1148-1158 (SQSQPSSEQPA) has biased composition (low complexity). Positions 1188–1202 (QPQSTVTNTQTQDVL) are enriched in polar residues. 2 stretches are compositionally biased toward low complexity: residues 1204-1226 (SQGS…KTGS) and 1233-1251 (KSAL…SGKS). A compositionally biased stretch (polar residues) spans 1258 to 1276 (AASSTDPTTKPTRKVSINA). Residues 1284-1299 (KSSTKQSTKTSTQPSD) show a composition bias toward low complexity. Residues 1408 to 1438 (AEQIRNLEVDELKILRQQVRERIANERQQQD) adopt a coiled-coil conformation. The interval 1454–1483 (DMLVSEESAAPTPLPMDTGRFTPKSDVDMS) is disordered.

The protein is Protein ORF C of Elephantid herpesvirus 1 (isolate Asian elephant/Berlin/Kiba/1998) (EIHV-1).